We begin with the raw amino-acid sequence, 352 residues long: Probable protein phosphatase 2C 56 (352 aa).

2 disordered regions span residues 18 to 37 (RGRR…ASRG) and 53 to 87 (SSSS…ITGG). 2 stretches are compositionally biased toward low complexity: residues 23-37 (AASP…ASRG) and 53-75 (SSSS…ARTR). The 248-residue stretch at 96 to 343 (SWDYSSFKGR…DNITCIVLQF (248 aa)) folds into the PPM-type phosphatase domain. Residues Asp132, Gly133, Asp295, and Asp334 each contribute to the Mn(2+) site.

Belongs to the PP2C family. Mg(2+) is required as a cofactor. It depends on Mn(2+) as a cofactor.

It carries out the reaction O-phospho-L-seryl-[protein] + H2O = L-seryl-[protein] + phosphate. It catalyses the reaction O-phospho-L-threonyl-[protein] + H2O = L-threonyl-[protein] + phosphate. In Oryza sativa subsp. japonica (Rice), this protein is Probable protein phosphatase 2C 56.